The chain runs to 801 residues: Interleukin-4 receptor subunit alpha (801 aa).

The first 25 residues, 1–25 (MGWLCTKFLSSVSCLILLWVTGSGG), serve as a signal peptide directing secretion. Residues 26–232 (IKVLGDPTCF…NHFQLPLLQR (207 aa)) are Extracellular-facing. The cysteines at positions 34 and 44 are disulfide-linked. N-linked (GlcNAc...) asparagine glycosylation is present at N71. An intrachain disulfide couples C74 to C86. The Fibronectin type-III domain maps to 125-223 (APDNLTLHTN…EWSPSITWYN (99 aa)). N-linked (GlcNAc...) asparagine glycans are attached at residues N128, N134, and N162. S164 is subject to Phosphoserine. The N-linked (GlcNAc...) asparagine glycan is linked to N176. The WSXWS motif motif lies at 212 to 216 (WSEWS). The helical transmembrane segment at 233-256 (LPLGVSISCICILLFCLTCYFSII) threads the bilayer. Topologically, residues 257-801 (KIKKIWWDQI…PVGTLGVTVS (545 aa)) are cytoplasmic. Residues 262–270 (WWDQIPTPA) carry the Box 1 motif motif. A disordered region spans residues 424-476 (VGQSSMAESSSLLPSESGQASTSWACFPTGPSETTCQVTGQQPPHPDPERATG). Over residues 426-444 (QSSMAESSSLLPSESGQAS) the composition is skewed to low complexity. A required for IRS1 activation and IL4-induced cell growth region spans residues 439-549 (ESGQASTSWA…ESWEQILHMS (111 aa)). A compositionally biased stretch (polar residues) spans 454-465 (PSETTCQVTGQQ). A Phosphotyrosine modification is found at Y492. The segment at 493 to 515 (RSFSDFSSPAPNPGELASEQKQA) is disordered. The segment at 549–644 (SVLQHGTAGS…NSMPLFTFGL (96 aa)) is required for IL4-induced gene expression. Residues Y566, Y594, and Y622 each carry the phosphotyrosine modification. The ITIM motif signature appears at 698 to 703 (IVYSSL). The disordered stretch occupies residues 767-801 (RTPSNLSGVGKGPGHSPVPSQTTEVPVGTLGVTVS).

This sequence belongs to the type I cytokine receptor family. Type 4 subfamily. In terms of assembly, the functional IL4 receptor is formed by initial binding of IL4 to IL4R. Subsequent recruitment to the complex of the common gamma chain, in immune cells, creates a type I receptor and, in non-immune cells, of IL13RA1 forms a type II receptor. IL4R can also interact with the IL13/IL13RA1 complex to form a similar type II receptor. Interacts with PIK3C3. Interacts with the SH2-containing phosphatases, PTPN6/SHIP1, PTPN11/SHIP2 and INPP5D/SHIP. Interacts with JAK1 through a Box 1-containing region; inhibited by SOCS5. Interacts with SOCS5; inhibits IL4 signaling. Interacts with JAK3. Interacts with CLM1. Interacts with IL13RA2. In terms of processing, on IL4 binding, phosphorylated on C-terminal tyrosine residues. Isoform 2 is expressed in kidney, spleen, lung and liver.

It localises to the cell membrane. Its subcellular location is the secreted. Functionally, receptor for both interleukin 4 and interleukin 13. Couples to the JAK1/2/3-STAT6 pathway. The IL4 response is involved in promoting Th2 differentiation. The IL4/IL13 responses are involved in regulating IgE production and, chemokine and mucus production at sites of allergic inflammation. In certain cell types, can signal through activation of insulin receptor substrates, IRS1/IRS2. In terms of biological role, isoform 2 (soluble form) inhibits IL4-induced spleen cell proliferation. This chain is Interleukin-4 receptor subunit alpha (Il4r), found in Rattus norvegicus (Rat).